The sequence spans 101 residues: Integration host factor subunit beta (101 aa).

This sequence belongs to the bacterial histone-like protein family. In terms of assembly, heterodimer of an alpha and a beta chain.

Its function is as follows. This protein is one of the two subunits of integration host factor, a specific DNA-binding protein that functions in genetic recombination as well as in transcriptional and translational control. The polypeptide is Integration host factor subunit beta (Rhodopseudomonas palustris (strain BisB5)).